Here is a 344-residue protein sequence, read N- to C-terminus: MANYTLAPEDEYDVLIEGELESDEAEQCDRYDTWALSAQLVPSLCSAVFVVGVLDNLLVVLILVKYKGLKRVENIYLLNLAVSNLCFLLTLPFWAHAGGDPMCKILIGLYFVGLYSETFFNCLLTLQRYLVFLHKGNFFSVRRRVPCGIVTSAVAWVTAILATVPEFAVYKPQMEDPKYKCAFSRTPFLPADETFWKHFLTLKMNVSVLVFPLFIFTFLYVQMRKTLRFGEQRYSLFKLVFAIMVVFLLMWAPYNIALFLSTFKEHFSLSDCKSNYNLDKSVLITKLIATTHCCVNPLLYVFLDGTFRKYLCRFFHRRSNTPRQPRRRFAQGTSREEPDRSTEV.

Topologically, residues 1-43 are extracellular; sequence MANYTLAPEDEYDVLIEGELESDEAEQCDRYDTWALSAQLVPS. An N-linked (GlcNAc...) asparagine glycan is attached at asparagine 3. The chain crosses the membrane as a helical span at residues 44–64; it reads LCSAVFVVGVLDNLLVVLILV. The Cytoplasmic segment spans residues 65-74; the sequence is KYKGLKRVEN. Residues 75–95 traverse the membrane as a helical segment; the sequence is IYLLNLAVSNLCFLLTLPFWA. Residues 96-104 are Extracellular-facing; the sequence is HAGGDPMCK. Cysteine 103 and cysteine 181 are disulfide-bonded. The helical transmembrane segment at 105–125 threads the bilayer; it reads ILIGLYFVGLYSETFFNCLLT. Over 126 to 148 the chain is Cytoplasmic; that stretch reads LQRYLVFLHKGNFFSVRRRVPCG. Residues 149-169 form a helical membrane-spanning segment; that stretch reads IVTSAVAWVTAILATVPEFAV. Residues 170 to 198 lie on the Extracellular side of the membrane; the sequence is YKPQMEDPKYKCAFSRTPFLPADETFWKH. The helical transmembrane segment at 199–219 threads the bilayer; the sequence is FLTLKMNVSVLVFPLFIFTFL. Residues 220-238 lie on the Cytoplasmic side of the membrane; that stretch reads YVQMRKTLRFGEQRYSLFK. A helical transmembrane segment spans residues 239–259; it reads LVFAIMVVFLLMWAPYNIALF. Topologically, residues 260–281 are extracellular; sequence LSTFKEHFSLSDCKSNYNLDKS. Residues 282–302 traverse the membrane as a helical segment; sequence VLITKLIATTHCCVNPLLYVF. Residues 303-344 lie on the Cytoplasmic side of the membrane; that stretch reads LDGTFRKYLCRFFHRRSNTPRQPRRRFAQGTSREEPDRSTEV. Residues 323–344 are disordered; that stretch reads RQPRRRFAQGTSREEPDRSTEV. Over residues 334-344 the composition is skewed to basic and acidic residues; it reads SREEPDRSTEV.

Belongs to the G-protein coupled receptor 1 family.

The protein localises to the cell membrane. In terms of biological role, receptor for CCL19 and chemerin/RARRES2. Does not appear to be a signaling receptor, but may have a role in modulating chemokine-triggered immune responses by capturing and internalizing CCL19 or by presenting RARRES2 ligand to CMKLR1, a functional signaling receptor. Plays a critical role for the development of Th2 responses. This chain is C-C chemokine receptor-like 2 (CCRL2), found in Macaca mulatta (Rhesus macaque).